The chain runs to 225 residues: Class E basic helix-loop-helix protein 23 (225 aa).

A disordered region spans residues 35–104 (EAARGYGTPG…PREQRSLRLS (70 aa)). The region spanning 100 to 154 (SLRLSINARERRRMHDLNDALDGLRAVIPYAHSPSVRKLSKIATLLLAKNYILMQ) is the bHLH domain.

Its subcellular location is the nucleus. Functionally, may function as transcriptional repressor. May modulate the expression of genes required for the differentiation and/or maintenance of pancreatic and neuronal cell types. May be important for rod bipolar cell maturation. This Homo sapiens (Human) protein is Class E basic helix-loop-helix protein 23 (BHLHE23).